The primary structure comprises 565 residues: NAD-dependent malic enzyme (565 aa).

The active-site Proton donor is Tyr-104. NAD(+) is bound at residue Arg-157. The Proton acceptor role is filled by Lys-175. A divalent metal cation is bound by residues Glu-246, Asp-247, and Asp-270. 2 residues coordinate NAD(+): Asp-270 and Asn-418.

The protein belongs to the malic enzymes family. In terms of assembly, homotetramer. The cofactor is Mg(2+). Requires Mn(2+) as cofactor.

The enzyme catalyses (S)-malate + NAD(+) = pyruvate + CO2 + NADH. It carries out the reaction oxaloacetate + H(+) = pyruvate + CO2. The protein is NAD-dependent malic enzyme of Escherichia coli O139:H28 (strain E24377A / ETEC).